We begin with the raw amino-acid sequence, 334 residues long: Mevalonate kinase (334 aa).

110–120 (PVGAGLGSSAA) is a binding site for ATP. D161 acts as the Proton acceptor in catalysis.

The protein belongs to the GHMP kinase family. Mevalonate kinase subfamily. In terms of assembly, homodimer. The cofactor is Mg(2+).

It is found in the cytoplasm. The catalysed reaction is (R)-mevalonate + ATP = (R)-5-phosphomevalonate + ADP + H(+). It functions in the pathway isoprenoid biosynthesis; isopentenyl diphosphate biosynthesis via mevalonate pathway; isopentenyl diphosphate from (R)-mevalonate: step 1/3. In terms of biological role, catalyzes the phosphorylation of (R)-mevalonate (MVA) to (R)-mevalonate 5-phosphate (MVAP). Functions in the mevalonate (MVA) pathway leading to isopentenyl diphosphate (IPP), a key precursor for the biosynthesis of isoprenoid compounds such as archaeal membrane lipids. The chain is Mevalonate kinase from Thermococcus onnurineus (strain NA1).